The chain runs to 729 residues: Capsid protein VP1 (729 aa).

Basic residues predominate over residues 1–10 (MAPPAKRAKR). Disordered stretches follow at residues 1–38 (MAPP…SDAA), 96–115 (LATD…KRTR), and 130–185 (KLTS…VGVS). A Nuclear localization signal motif is present at residues 4 to 13 (PAKRAKRGWV). Residues 19 to 64 (YLGPGNSLDQGEPTNPSDAAAKEHDEAYDQYIKSGKNPYLYFSAAD) form a phospholipase A2-like region. The segment covering 25-35 (SLDQGEPTNPS) has biased composition (polar residues). Low complexity predominate over residues 132 to 142 (TSSAAQQSSQT). Over residues 143–152 (MSDGTSQPDS) the composition is skewed to polar residues. Residues 168 to 184 (GPGGSGGGGSGGGGVGV) are compositionally biased toward gly residues. Asn-325 provides a ligand contact to Mg(2+).

Belongs to the parvoviridae capsid protein family.

It localises to the virion. It is found in the host nucleus. Its function is as follows. Capsid protein self-assembles to form an icosahedral capsid with a T=1 symmetry, about 22 nm in diameter, and consisting of 60 copies of two size variants of the capsid proteins, VP1 and VP2, which differ by the presence of an N-terminal extension in the minor protein VP1. The capsid encapsulates the genomic ssDNA. Capsid proteins are responsible for the attachment to host cell receptors. This attachment induces virion internalization predominantly through clathrin-dependent endocytosis. Binding to the host receptors also induces capsid rearrangements leading to surface exposure of VP1 N-terminus, specifically its phospholipase A2-like region and putative nuclear localization signal(s). VP1 N-terminus might serve as a lipolytic enzyme to breach the endosomal membrane during entry into host cell and might contribute to virus transport to the nucleus. The protein is Capsid protein VP1 of Mus musculus (Mouse).